Reading from the N-terminus, the 430-residue chain is Glutamate-1-semialdehyde 2,1-aminomutase (430 aa).

K265 bears the N6-(pyridoxal phosphate)lysine mark.

This sequence belongs to the class-III pyridoxal-phosphate-dependent aminotransferase family. HemL subfamily. Homodimer. Requires pyridoxal 5'-phosphate as cofactor.

It localises to the cytoplasm. It catalyses the reaction (S)-4-amino-5-oxopentanoate = 5-aminolevulinate. The protein operates within porphyrin-containing compound metabolism; protoporphyrin-IX biosynthesis; 5-aminolevulinate from L-glutamyl-tRNA(Glu): step 2/2. The chain is Glutamate-1-semialdehyde 2,1-aminomutase from Shewanella baltica (strain OS195).